A 96-amino-acid chain; its full sequence is Protein RSI-1 (96 aa).

An N-terminal signal peptide occupies residues 1–29; that stretch reads MAKSGYNASFLLLISMFLILLTFSNVVEG.

This sequence belongs to the GASA family. Six disulfide bonds may be present. Expressed very early in lateral root development.

Its subcellular location is the secreted. The polypeptide is Protein RSI-1 (RSI-1) (Solanum lycopersicum (Tomato)).